Consider the following 396-residue polypeptide: Argininosuccinate synthase (396 aa).

9 to 17 (AYSGGLDTS) is a binding site for ATP. Position 85 (Tyr85) interacts with L-citrulline. Residue Gly115 participates in ATP binding. Residues Thr117, Asn121, and Asp122 each contribute to the L-aspartate site. Asn121 is a binding site for L-citrulline. Residues Arg125, Ser173, Glu258, and Tyr270 each contribute to the L-citrulline site.

The protein belongs to the argininosuccinate synthase family. Type 1 subfamily. Homotetramer.

Its subcellular location is the cytoplasm. It catalyses the reaction L-citrulline + L-aspartate + ATP = 2-(N(omega)-L-arginino)succinate + AMP + diphosphate + H(+). The protein operates within amino-acid biosynthesis; L-arginine biosynthesis; L-arginine from L-ornithine and carbamoyl phosphate: step 2/3. In Streptococcus agalactiae serotype III (strain NEM316), this protein is Argininosuccinate synthase.